The sequence spans 357 residues: Chorismate synthase (357 aa).

Residue Arg48 coordinates NADP(+). Residues 125–127, 238–239, Gly282, 297–301, and Arg323 each bind FMN; these read RSS, NA, and KPTSS.

The protein belongs to the chorismate synthase family. Homotetramer. Requires FMNH2 as cofactor.

The enzyme catalyses 5-O-(1-carboxyvinyl)-3-phosphoshikimate = chorismate + phosphate. It participates in metabolic intermediate biosynthesis; chorismate biosynthesis; chorismate from D-erythrose 4-phosphate and phosphoenolpyruvate: step 7/7. Functionally, catalyzes the anti-1,4-elimination of the C-3 phosphate and the C-6 proR hydrogen from 5-enolpyruvylshikimate-3-phosphate (EPSP) to yield chorismate, which is the branch point compound that serves as the starting substrate for the three terminal pathways of aromatic amino acid biosynthesis. This reaction introduces a second double bond into the aromatic ring system. This chain is Chorismate synthase, found in Gluconacetobacter diazotrophicus (strain ATCC 49037 / DSM 5601 / CCUG 37298 / CIP 103539 / LMG 7603 / PAl5).